A 101-amino-acid chain; its full sequence is Thrombin-like enzyme okinaxobin-1 (101 aa).

Residues 1–16 (LIRVLANLLILQLSYA) form the signal peptide. Positions 17–22 (QKSSEL) are excised as a propeptide. The 79-residue stretch at 23 to 101 (VIGGDECNIN…PKKKYFFRCR (79 aa)) folds into the Peptidase S1 domain. Residues Cys-50 and Cys-66 are joined by a disulfide bond. The active-site Charge relay system is the His-65.

The protein belongs to the peptidase S1 family. Snake venom subfamily. As to quaternary structure, monomer. Post-translationally, glycosylated. As to expression, expressed by the venom gland.

The protein localises to the secreted. Strongly inactivated by diisopropylfluorophosphate (DFP) and phenylmethanesulfonyl fluoride (PMSF), and to a lesser extent by tosyl-L-lysine chloromethyl ketone (TLCK). Thrombin-like snake venom serine protease that releases specifically fibrinopeptide B from fibrinogen (FGB) to form fibrin clots. Shows a preferential cleavage at Arg-|-Gly bonds in fibrinogen beta chains. Cleaves fibrinogen beta chains preferentially to alpha chains. This chain is Thrombin-like enzyme okinaxobin-1, found in Ovophis okinavensis (Ryukyu Island pit viper).